Reading from the N-terminus, the 487-residue chain is Serine/threonine-protein kinase 4 (487 aa).

N-acetylmethionine is present on Met-1. Thr-3 carries the post-translational modification Phosphothreonine. The Protein kinase domain maps to 30 to 281 (FDVLEKLGEG…ATQLLQHPFV (252 aa)). Residues 36-44 (LGEGSYGSV) and Lys-59 contribute to the ATP site. Asp-149 functions as the Proton acceptor in the catalytic mechanism. Thr-183 is modified (phosphothreonine; by autocatalysis). Ser-265 bears the Phosphoserine mark. Residues 289–311 (ILRDLINEAMDVKLKRQEAQQRE) are a coiled coil. The interval 305–334 (QEAQQREVDQDDEENSEEDEMDSGTMVRAA) is disordered. Residues 313-326 (DQDDEENSEEDEMD) show a composition bias toward acidic residues. A Phosphoserine modification is found at Ser-320. Thr-340 and Thr-367 each carry phosphothreonine. Thr-387 bears the Phosphothreonine; by PKB/AKT1 mark. Ser-410 bears the Phosphoserine mark. Tyr-433 bears the Phosphotyrosine mark. The SARAH domain maps to 433–480 (YEFLKSWTVEDLQKRLLALDPMMEQEMEEIRQKYRSKRQPILDAIEAK).

It belongs to the protein kinase superfamily. STE Ser/Thr protein kinase family. STE20 subfamily. In terms of assembly, homodimer; mediated via the coiled-coil region. Interacts with NORE1, which inhibits autoactivation. Interacts with and stabilizes SAV1. Interacts with RASSF1. Interacts with FOXO3. Interacts with RASSF2 (via SARAH domain). Interacts with AR, PKB/AKT1, TNNI3 and SIRT1. Interacts with MARK3 and SCRIB in the presence of DLG5. Interacts with DLG5 (via PDZ domain 3). It depends on Mg(2+) as a cofactor. In terms of processing, autophosphorylated on serine and threonine residues. Phosphorylation at Thr-387 by PKB/AKT1, leads to inhibition of its: kinase activity, nuclear translocation and autophosphorylation at Thr-183. It also diminishes its cleavage by caspases and its ability to phosphorylate FOXO3. Post-translationally, proteolytically cleaved by caspase-3 during apoptosis at Asp-326 resulting in a 37 kDa form. Proteolytic cleavage results in kinase activation and nuclear translocation of the truncated form (MST1/N).

Its subcellular location is the cytoplasm. It is found in the nucleus. It carries out the reaction L-seryl-[protein] + ATP = O-phospho-L-seryl-[protein] + ADP + H(+). The enzyme catalyses L-threonyl-[protein] + ATP = O-phospho-L-threonyl-[protein] + ADP + H(+). With respect to regulation, inhibited by the C-terminal non-catalytic region. Activated by caspase-cleavage. Full activation also requires homodimerization and autophosphorylation of Thr-183. Activated by RASSF1 which acts by preventing its dephosphorylation. Stress-activated, pro-apoptotic kinase which, following caspase-cleavage, enters the nucleus and induces chromatin condensation followed by internucleosomal DNA fragmentation. Key component of the Hippo signaling pathway which plays a pivotal role in organ size control and tumor suppression by restricting proliferation and promoting apoptosis. The core of this pathway is composed of a kinase cascade wherein STK3/MST2 and STK4/MST1, in complex with its regulatory protein SAV1, phosphorylates and activates LATS1/2 in complex with its regulatory protein MOB1, which in turn phosphorylates and inactivates YAP1 oncoprotein and WWTR1/TAZ. Phosphorylation of YAP1 by LATS2 inhibits its translocation into the nucleus to regulate cellular genes important for cell proliferation, cell death, and cell migration. STK3/MST2 and STK4/MST1 are required to repress proliferation of mature hepatocytes, to prevent activation of facultative adult liver stem cells (oval cells), and to inhibit tumor formation. Phosphorylates 'Ser-14' of histone H2B (H2BS14ph) during apoptosis. Phosphorylates FOXO3 upon oxidative stress, which results in its nuclear translocation and cell death initiation. Phosphorylates MOBKL1A, MOBKL1B and RASSF2. Phosphorylates TNNI3 (cardiac Tn-I) and alters its binding affinity to TNNC1 (cardiac Tn-C) and TNNT2 (cardiac Tn-T). Phosphorylates FOXO1 on 'Ser-212' and regulates its activation and stimulates transcription of PMAIP1 in a FOXO1-dependent manner. Phosphorylates SIRT1 and inhibits SIRT1-mediated p53/TP53 deacetylation, thereby promoting p53/TP53 dependent transcription and apoptosis upon DNA damage. Acts as an inhibitor of PKB/AKT1. Phosphorylates AR on 'Ser-650' and suppresses its activity by intersecting with PKB/AKT1 signaling and antagonizing formation of AR-chromatin complexes. This Mus musculus (Mouse) protein is Serine/threonine-protein kinase 4 (Stk4).